A 47-amino-acid chain; its full sequence is Short transmembrane mitochondrial protein 1 (47 aa).

Residues 7-23 (GFTLGNVVGMYLAQNYD) form a helical membrane-spanning segment.

It belongs to the STMP1 family. Interacts with components of the ubiquinol-cytochrome c oxidoreductase (cytochrome b-c1 complex, complex III, CIII), such as UQCRC1/QCR1, UQCRC2/QCR2 and UQCR10/QCR9. Interacts with components of the cytochrome c oxidase (mitochondrial respiratory chain complex IV) complex, such as MT-CO2. As to expression, expressed in monocytes and dendritic cells.

It is found in the mitochondrion inner membrane. Its subcellular location is the mitochondrion outer membrane. The protein resides in the mitochondrion intermembrane space. Its function is as follows. Microprotein involved in mitochondrial respiratory chain complex III (ubiquinol-cytochrome c oxidoreductase) and complex IV (mitochondrial cytochrome c oxidase complex) assembly. Required for the formation of mitochondrial supercomplexes (SCs). Also required for the activation of the NLRP3 inflammasome. The sequence is that of Short transmembrane mitochondrial protein 1 from Homo sapiens (Human).